The primary structure comprises 441 residues: NADH-quinone oxidoreductase subunit D (441 aa).

This sequence belongs to the complex I 49 kDa subunit family. As to quaternary structure, NDH-1 is composed of 14 different subunits. Subunits NuoB, C, D, E, F, and G constitute the peripheral sector of the complex.

Its subcellular location is the cell membrane. The enzyme catalyses a quinone + NADH + 5 H(+)(in) = a quinol + NAD(+) + 4 H(+)(out). In terms of biological role, NDH-1 shuttles electrons from NADH, via FMN and iron-sulfur (Fe-S) centers, to quinones in the respiratory chain. The immediate electron acceptor for the enzyme in this species is believed to be a menaquinone. Couples the redox reaction to proton translocation (for every two electrons transferred, four hydrogen ions are translocated across the cytoplasmic membrane), and thus conserves the redox energy in a proton gradient. The sequence is that of NADH-quinone oxidoreductase subunit D from Mycobacterium avium (strain 104).